The chain runs to 85 residues: Small ribosomal subunit protein bS18 (85 aa).

The segment covering 1-12 (MAFAQAGGGGGQ) has biased composition (gly residues). A disordered region spans residues 1 to 22 (MAFAQAGGGGGQRRPFFRRRKT).

This sequence belongs to the bacterial ribosomal protein bS18 family. Part of the 30S ribosomal subunit. Forms a tight heterodimer with protein bS6.

Binds as a heterodimer with protein bS6 to the central domain of the 16S rRNA, where it helps stabilize the platform of the 30S subunit. In Azorhizobium caulinodans (strain ATCC 43989 / DSM 5975 / JCM 20966 / LMG 6465 / NBRC 14845 / NCIMB 13405 / ORS 571), this protein is Small ribosomal subunit protein bS18.